The primary structure comprises 236 residues: 2,3,4,5-tetrahydropyridine-2,6-dicarboxylate N-acetyltransferase (236 aa).

The protein belongs to the transferase hexapeptide repeat family. DapH subfamily.

It catalyses the reaction (S)-2,3,4,5-tetrahydrodipicolinate + acetyl-CoA + H2O = L-2-acetamido-6-oxoheptanedioate + CoA. The protein operates within amino-acid biosynthesis; L-lysine biosynthesis via DAP pathway; LL-2,6-diaminopimelate from (S)-tetrahydrodipicolinate (acetylase route): step 1/3. In terms of biological role, catalyzes the transfer of an acetyl group from acetyl-CoA to tetrahydrodipicolinate. This chain is 2,3,4,5-tetrahydropyridine-2,6-dicarboxylate N-acetyltransferase, found in Clostridium botulinum (strain Langeland / NCTC 10281 / Type F).